The following is a 330-amino-acid chain: ATP-dependent Clp protease proteolytic subunit-related protein 3, chloroplastic (330 aa).

The transit peptide at 1 to 43 (MASCLQASMNSLLPRSSSFSPHPPLSSNSSGRRNLKTFRYAFR) directs the protein to the chloroplast. The interval 7–32 (ASMNSLLPRSSSFSPHPPLSSNSSGR) is disordered. Positions 8 to 30 (SMNSLLPRSSSFSPHPPLSSNSS) are enriched in low complexity.

This sequence belongs to the peptidase S14 family. In terms of assembly, component of the chloroplastic Clp protease core complex which consist of at least 16 proteins: CLPP4 (3 copies), CLPP5 (3 copies), CLPR4 (2 copies), ClpP1 (1 copy), CLPP6 (1 copy), CLPR2 (1 copy), CLPT1 (1 copy), CLPT2 (1 copy) and 3 copies of CLPP3 and/or CLPR1 and/or CLPR3. The core complex is organized in two heptameric rings, one containing CLPP3,4,5,6 in a 1:2:3:1 ratio and the other CLPP1 and CLPR1,2,3,4 in a 3:1:1:1:1 ratio.

The protein resides in the plastid. The protein localises to the chloroplast. This Arabidopsis thaliana (Mouse-ear cress) protein is ATP-dependent Clp protease proteolytic subunit-related protein 3, chloroplastic.